The sequence spans 421 residues: 3-isopropylmalate dehydratase large subunit (421 aa).

Residues Cys292, Cys352, and Cys355 each coordinate [4Fe-4S] cluster.

It belongs to the aconitase/IPM isomerase family. LeuC type 2 subfamily. As to quaternary structure, heterodimer of LeuC and LeuD. Requires [4Fe-4S] cluster as cofactor.

It catalyses the reaction (2R,3S)-3-isopropylmalate = (2S)-2-isopropylmalate. Its pathway is amino-acid biosynthesis; L-leucine biosynthesis; L-leucine from 3-methyl-2-oxobutanoate: step 2/4. In terms of biological role, catalyzes the isomerization between 2-isopropylmalate and 3-isopropylmalate, via the formation of 2-isopropylmaleate. The protein is 3-isopropylmalate dehydratase large subunit of Herpetosiphon aurantiacus (strain ATCC 23779 / DSM 785 / 114-95).